A 305-amino-acid polypeptide reads, in one-letter code: Methionyl-tRNA formyltransferase (305 aa).

111 to 114 (SLLP) contributes to the (6S)-5,6,7,8-tetrahydrofolate binding site.

This sequence belongs to the Fmt family.

The catalysed reaction is L-methionyl-tRNA(fMet) + (6R)-10-formyltetrahydrofolate = N-formyl-L-methionyl-tRNA(fMet) + (6S)-5,6,7,8-tetrahydrofolate + H(+). Its function is as follows. Attaches a formyl group to the free amino group of methionyl-tRNA(fMet). The formyl group appears to play a dual role in the initiator identity of N-formylmethionyl-tRNA by promoting its recognition by IF2 and preventing the misappropriation of this tRNA by the elongation apparatus. The sequence is that of Methionyl-tRNA formyltransferase from Helicobacter pylori (strain HPAG1).